A 417-amino-acid polypeptide reads, in one-letter code: Serine hydroxymethyltransferase (417 aa).

(6S)-5,6,7,8-tetrahydrofolate-binding positions include Leu-121 and 125 to 127 (GHL). At Lys-230 the chain carries N6-(pyridoxal phosphate)lysine. 355-357 (SPF) contributes to the (6S)-5,6,7,8-tetrahydrofolate binding site.

The protein belongs to the SHMT family. In terms of assembly, homodimer. It depends on pyridoxal 5'-phosphate as a cofactor.

The protein localises to the cytoplasm. It catalyses the reaction (6R)-5,10-methylene-5,6,7,8-tetrahydrofolate + glycine + H2O = (6S)-5,6,7,8-tetrahydrofolate + L-serine. The protein operates within one-carbon metabolism; tetrahydrofolate interconversion. It functions in the pathway amino-acid biosynthesis; glycine biosynthesis; glycine from L-serine: step 1/1. Its function is as follows. Catalyzes the reversible interconversion of serine and glycine with tetrahydrofolate (THF) serving as the one-carbon carrier. This reaction serves as the major source of one-carbon groups required for the biosynthesis of purines, thymidylate, methionine, and other important biomolecules. Also exhibits THF-independent aldolase activity toward beta-hydroxyamino acids, producing glycine and aldehydes, via a retro-aldol mechanism. The polypeptide is Serine hydroxymethyltransferase (Legionella pneumophila subsp. pneumophila (strain Philadelphia 1 / ATCC 33152 / DSM 7513)).